A 44-amino-acid polypeptide reads, in one-letter code: Antibacterial protein 2 homolog (44 aa).

Belongs to the staphylococcal hemolytic protein family.

The protein localises to the secreted. Has hemolytic activity and also inhibits the growth of gonococci. This chain is Antibacterial protein 2 homolog, found in Staphylococcus haemolyticus (strain JCSC1435).